Here is a 264-residue protein sequence, read N- to C-terminus: Zinc import ATP-binding protein ZnuC (264 aa).

The 216-residue stretch at 20–235 (VQLKNIEVTF…PNFIHFFGDQ (216 aa)) folds into the ABC transporter domain. ATP is bound at residue 52 to 59 (GPNGGGKS).

This sequence belongs to the ABC transporter superfamily. Zinc importer (TC 3.A.1.15.5) family. The complex is composed of two ATP-binding proteins (ZnuC), two transmembrane proteins (ZnuB) and a solute-binding protein (ZnuA).

The protein localises to the cell inner membrane. It carries out the reaction Zn(2+)(out) + ATP(in) + H2O(in) = Zn(2+)(in) + ADP(in) + phosphate(in) + H(+)(in). Functionally, part of the ABC transporter complex ZnuABC involved in zinc import. Responsible for energy coupling to the transport system. The sequence is that of Zinc import ATP-binding protein ZnuC from Haemophilus ducreyi (strain 35000HP / ATCC 700724).